The following is a 405-amino-acid chain: GTPase Obg (405 aa).

One can recognise an Obg domain in the interval 1–159; that stretch reads MKFVDEVSIF…RDLKLELKVL (159 aa). Residues 127 to 148 are disordered; that stretch reads NTRFKSSTNRAPRQTTPGKPGD. Residues 129–143 show a composition bias toward polar residues; that stretch reads RFKSSTNRAPRQTTP. The OBG-type G domain maps to 160-333; that stretch reads ADVGLLGLPN…LSQAIMRYLD (174 aa). GTP is bound by residues 166-173, 191-195, 213-216, 283-286, and 314-316; these read GLPNAGKS, FTTLV, DIPG, NKAD, and SAL. Positions 173 and 193 each coordinate Mg(2+). The disordered stretch occupies residues 373 to 405; it reads LRRAGVKSVEEADDDDFDDDDDDEGGAEIIYVR. A compositionally biased stretch (acidic residues) spans 383-398; it reads EADDDDFDDDDDDEGG.

The protein belongs to the TRAFAC class OBG-HflX-like GTPase superfamily. OBG GTPase family. Monomer. The cofactor is Mg(2+).

The protein localises to the cytoplasm. Functionally, an essential GTPase which binds GTP, GDP and possibly (p)ppGpp with moderate affinity, with high nucleotide exchange rates and a fairly low GTP hydrolysis rate. Plays a role in control of the cell cycle, stress response, ribosome biogenesis and in those bacteria that undergo differentiation, in morphogenesis control. This Stutzerimonas stutzeri (strain A1501) (Pseudomonas stutzeri) protein is GTPase Obg.